Consider the following 975-residue polypeptide: SRQVKEQLIKHNIGQRIFGHYVLGLSQGSVSEILARPKPWNKLTVRGKEPFHKMKQFLSDEQNILALRSIQGRQRENPGQSLNRLFQEVPKRRNGSEGNITTRIRASETGSDEAIKSILEQAKRELQVQKTAEPAQPSSTSSSGTSDDAIRSILQQARREMEAQQAALDPALKPAPLSQADLAILSPKLIPSSPMSSVSSYPPLALSLKKPPTAPDTSASTLPNPPALKKESQDAPGLDLPGAAESAQGVLRHVKSELGRSGVWKDHWWSTVQPERKSAAPPEDAKSEEAGGTKEKGGGQGHGPIAASSRDPHHRRSTGRNGPALSPRTPQSSELSLTGASRSETPQNSPLPSSPIVPMSKPAKPSVPPLTPEQYEIYMYQEVDTIELTRQVKEKLAKNGICQRIFGEKVLGLSQGSVSDMLSRPKPWSKLTQKGREPFIRMQLWLNGELGQGVLPVQGQQQGPVLHSVTSLQDPLQQGCVSSESTPKTSASCSPAPESPMSSSESVKSLTELVQQPCPPIETSKDGKPPEPSDPPASDSQPATPLPLSGHSALSIQELVAMSPELDTYGITKRVKEVLTDNNLGQRLFGETILGLTQGSVSDLLSRPKPWHKLSLKGREPFVRMQLWLNDPNNVEKLMDMKRMEKKAYMKRRHSSVSDSQPCEPPSVGIDYSQGASPQPQHQLKKPRVVLAPEEKEALKRAYQQKPYPSPKTIEELATQLNLKTSTVINWFHNYRSRIRRELFIEEIQAGSQGQAGARHSPSARSSGAAPSSEGDSCDGVEAAEGPGAADAEESAPAAAAKSQGGPAEAAVAPEEREEAPRPAEKRSRRPRGPGPGPGRRGGGGPAPGAPAAPAAAARGPSRRPGARAKPRRRRRRRRRHARGGGRRYLSRPARGGPCRARDGAHRSSALPSTSAPAAARRPSSLQSLFGLPEAAGARDSRDNPLRKKKAANLNSIIHRLEKAASREEPIEWEF.

The CUT 1 DNA-binding region spans 1–73; the sequence is SRQVKEQLIK…ILALRSIQGR (73 aa). Disordered regions lie at residues 90–113 and 126–148; these read PKRR…GSDE and LQVQ…TSDD. Residues 113 to 169 are a coiled coil; that stretch reads EAIKSILEQAKRELQVQKTAEPAQPSSTSSSGTSDDAIRSILQQARREMEAQQAALD. Residue S207 is modified to Phosphoserine. The interval 209–246 is disordered; sequence KKPPTAPDTSASTLPNPPALKKESQDAPGLDLPGAAES. Glycyl lysine isopeptide (Lys-Gly) (interchain with G-Cter in SUMO2) cross-links involve residues K229, K255, and K286. Basic and acidic residues predominate over residues 262–297; it reads GVWKDHWWSTVQPERKSAAPPEDAKSEEAGGTKEKG. Positions 262–369 are disordered; the sequence is GVWKDHWWST…SKPAKPSVPP (108 aa). Over residues 328–351 the composition is skewed to polar residues; it reads RTPQSSELSLTGASRSETPQNSPL. The residue at position 349 (S349) is a Phosphoserine. Positions 374–461 form a DNA-binding region, CUT 2; sequence QYEIYMYQEV…QGVLPVQGQQ (88 aa). Residues 476 to 489 are compositionally biased toward polar residues; it reads LQQGCVSSESTPKT. The tract at residues 476-549 is disordered; it reads LQQGCVSSES…SQPATPLPLS (74 aa). Residues 490-506 show a composition bias toward low complexity; that stretch reads SASCSPAPESPMSSSES. A phosphoserine mark is found at S499 and S509. The segment at residues 557 to 644 is a DNA-binding region (CUT 3); sequence QELVAMSPEL…VEKLMDMKRM (88 aa). The interval 652–687 is disordered; it reads RRHSSVSDSQPCEPPSVGIDYSQGASPQPQHQLKKP. Residues 684 to 743 constitute a DNA-binding region (homeobox); that stretch reads LKKPRVVLAPEEKEALKRAYQQKPYPSPKTIEELATQLNLKTSTVINWFHNYRSRIRREL. S710 bears the Phosphoserine mark. K724 is covalently cross-linked (Glycyl lysine isopeptide (Lys-Gly) (interchain with G-Cter in SUMO2)). A disordered region spans residues 752-949; the sequence is SQGQAGARHS…DSRDNPLRKK (198 aa). Over residues 756-773 the composition is skewed to low complexity; sequence AGARHSPSARSSGAAPSS. S777 carries the post-translational modification Phosphoserine. Over residues 780-813 the composition is skewed to low complexity; sequence GVEAAEGPGAADAEESAPAAAAKSQGGPAEAAVA. Residues 838-847 show a composition bias toward gly residues; sequence PGRRGGGGPA. Residues 850–860 show a composition bias toward low complexity; it reads APAAPAAAARG. The span at 861–890 shows a compositional bias: basic residues; sequence PSRRPGARAKPRRRRRRRRRHARGGGRRYL. Low complexity predominate over residues 907–929; that stretch reads RSSALPSTSAPAAARRPSSLQSL. Residue S925 is modified to Phosphoserine. Positions 937 to 946 are enriched in basic and acidic residues; sequence GARDSRDNPL. Residues S956 and S966 each carry the phosphoserine modification.

This sequence belongs to the CUT homeobox family. As to quaternary structure, interacts with BANP. Post-translationally, as cells progress into S phase, a fraction of CUX1 molecules is proteolytically processed into N-terminally truncated proteins of 110 kDa by CTSL. Cell cycle-dependent processing of CUX1 serves to generate a CDP/Cux p110 with distinct DNA binding and transcriptional properties. In terms of processing, phosphorylated by PKA. A broad pattern of expression observed in tissues of diverse origins, such as cartilage, liver, brain, lung, heart and skeletal muscle. There are 2 distinct protein species: the larger one (230-250 kDa) is found mainly in adult brain, lung and heart, and the smaller one (180-190 kDa) predominates in early embryonic tissues.

It is found in the nucleus. Its function is as follows. Transcription factor involved in the control of neuronal differentiation in the brain. Regulates dendrite development and branching, and dendritic spine formation in cortical layers II-III. Also involved in the control of synaptogenesis. In addition, it has probably a broad role in mammalian development as a repressor of developmentally regulated gene expression. May act by preventing binding of positively-activing CCAAT factors to promoters. Component of nf-munr repressor; binds to the matrix attachment regions (MARs) (5' and 3') of the immunoglobulin heavy chain enhancer. Represses T-cell receptor (TCR) beta enhancer function by binding to MARbeta, an ATC-rich DNA sequence located upstream of the TCR beta enhancer. Binds to the TH enhancer; may require the basic helix-loop-helix protein TCF4 as a coactivator. Plays a role in cell cycle progression, in particular at the G1/S transition. As cells progress into S phase, a fraction of CUX1 molecules is proteolytically processed into N-terminally truncated proteins of 110 kDa. While CUX1 only transiently binds to DNA and carries the CCAAT-displacement activity, CDP/Cux p110 makes a stable interaction with DNA and stimulates expression of genes such as POLA1. In Canis lupus familiaris (Dog), this protein is Homeobox protein cut-like 1 (CUX1).